Here is a 341-residue protein sequence, read N- to C-terminus: UDP-3-O-(3-hydroxymyristoyl)glucosamine N-acyltransferase (341 aa).

Catalysis depends on histidine 239, which acts as the Proton acceptor.

The protein belongs to the transferase hexapeptide repeat family. LpxD subfamily. As to quaternary structure, homotrimer.

It carries out the reaction a UDP-3-O-[(3R)-3-hydroxyacyl]-alpha-D-glucosamine + a (3R)-hydroxyacyl-[ACP] = a UDP-2-N,3-O-bis[(3R)-3-hydroxyacyl]-alpha-D-glucosamine + holo-[ACP] + H(+). The catalysed reaction is UDP-3-O-[(3R)-3-hydroxytetradecanoyl]-alpha-D-glucosamine + (3R)-hydroxytetradecanoyl-[ACP] = UDP-2-N,3-O-bis[(3R)-3-hydroxytetradecanoyl]-alpha-D-glucosamine + holo-[ACP] + H(+). It participates in glycolipid biosynthesis; lipid IV(A) biosynthesis; lipid IV(A) from (3R)-3-hydroxytetradecanoyl-[acyl-carrier-protein] and UDP-N-acetyl-alpha-D-glucosamine: step 3/6. Catalyzes the N-acylation of UDP-3-O-(hydroxytetradecanoyl)glucosamine using 3-hydroxytetradecanoyl-ACP as the acyl donor. Is involved in the biosynthesis of lipid A, a phosphorylated glycolipid that anchors the lipopolysaccharide to the outer membrane of the cell. This Escherichia coli O157:H7 protein is UDP-3-O-(3-hydroxymyristoyl)glucosamine N-acyltransferase.